The primary structure comprises 459 residues: tRNA modification GTPase MnmE (459 aa).

Residues Arg21, Glu84, and Arg123 each coordinate (6S)-5-formyl-5,6,7,8-tetrahydrofolate. A TrmE-type G domain is found at 219-378 (GVTVALAGAV…LLVLLYNFVL (160 aa)). Residues 229-234 (NAGKSS), 248-254 (TEHPGTT), and 273-276 (DTAG) each bind GTP. Ser233 and Thr254 together coordinate Mg(2+). Lys459 contributes to the (6S)-5-formyl-5,6,7,8-tetrahydrofolate binding site.

It belongs to the TRAFAC class TrmE-Era-EngA-EngB-Septin-like GTPase superfamily. TrmE GTPase family. In terms of assembly, homodimer. Heterotetramer of two MnmE and two MnmG subunits. The cofactor is K(+).

Its subcellular location is the cytoplasm. Exhibits a very high intrinsic GTPase hydrolysis rate. Involved in the addition of a carboxymethylaminomethyl (cmnm) group at the wobble position (U34) of certain tRNAs, forming tRNA-cmnm(5)s(2)U34. This is tRNA modification GTPase MnmE from Lawsonia intracellularis (strain PHE/MN1-00).